We begin with the raw amino-acid sequence, 318 residues long: ATP synthase gamma chain (318 aa).

This sequence belongs to the ATPase gamma chain family. In terms of assembly, F-type ATPases have 2 components, CF(1) - the catalytic core - and CF(0) - the membrane proton channel. CF(1) has five subunits: alpha(3), beta(3), gamma(1), delta(1), epsilon(1). CF(0) has three main subunits: a, b and c.

The protein localises to the cell membrane. Its function is as follows. Produces ATP from ADP in the presence of a proton gradient across the membrane. The gamma chain is believed to be important in regulating ATPase activity and the flow of protons through the CF(0) complex. The chain is ATP synthase gamma chain from Lactobacillus johnsonii (strain CNCM I-12250 / La1 / NCC 533).